A 256-amino-acid chain; its full sequence is Hydroxyacylglutathione hydrolase (256 aa).

His57, His59, Asp61, His62, His115, Asp134, and His172 together coordinate Zn(2+).

It belongs to the metallo-beta-lactamase superfamily. Glyoxalase II family. As to quaternary structure, monomer. Zn(2+) is required as a cofactor.

The enzyme catalyses an S-(2-hydroxyacyl)glutathione + H2O = a 2-hydroxy carboxylate + glutathione + H(+). Its pathway is secondary metabolite metabolism; methylglyoxal degradation; (R)-lactate from methylglyoxal: step 2/2. Its function is as follows. Thiolesterase that catalyzes the hydrolysis of S-D-lactoyl-glutathione to form glutathione and D-lactic acid. This chain is Hydroxyacylglutathione hydrolase, found in Rhizobium johnstonii (strain DSM 114642 / LMG 32736 / 3841) (Rhizobium leguminosarum bv. viciae).